Consider the following 856-residue polypeptide: Phosphatidylglycerol lysyltransferase (856 aa).

13 consecutive transmembrane segments (helical) span residues 7–27, 51–71, 88–108, 128–148, 161–181, 208–228, 235–255, 280–300, 342–362, 375–395, 420–440, 459–479, and 501–521; these read ALSI…IYQS, LFML…YDYV, VSWI…AGVG, IAWL…FVAA, PWLW…LAVS, SVVE…AMGI, VFGV…PGGF, IVLY…FFAA, SLSL…SLPI, ALLL…ILPI, FLKG…VLLV, IFAV…AGFI, and HATI…TVVY.

This sequence belongs to the LPG synthase family.

The protein resides in the cell membrane. The catalysed reaction is L-lysyl-tRNA(Lys) + a 1,2-diacyl-sn-glycero-3-phospho-(1'-sn-glycerol) = a 1,2-diacyl-sn-glycero-3-phospho-1'-(3'-O-L-lysyl)-sn-glycerol + tRNA(Lys). Functionally, catalyzes the transfer of a lysyl group from L-lysyl-tRNA(Lys) to membrane-bound phosphatidylglycerol (PG), which produces lysylphosphatidylglycerol (LPG), one of the components of the bacterial membrane with a positive net charge. LPG synthesis contributes to the resistance to cationic antimicrobial peptides (CAMPs) and likely protects B.subtilis against its own CAMPs and against those produced by competiting microorganisms (bacteriocins). In fact, the modification of anionic phosphatidylglycerol with positively charged L-lysine results in repulsion of the peptides. This Bacillus subtilis (strain 168) protein is Phosphatidylglycerol lysyltransferase (mprF).